A 452-amino-acid polypeptide reads, in one-letter code: Bifunctional protein GlmU (452 aa).

The interval 1–224 (MNIVILAAGM…VWETHGVNSK (224 aa)) is pyrophosphorylase. Residues 6 to 9 (LAAG), Lys-20, Gln-71, 76 to 77 (GT), 98 to 100 (YGD), Gly-135, Glu-149, Asn-164, and Asn-222 each bind UDP-N-acetyl-alpha-D-glucosamine. Residue Asp-100 coordinates Mg(2+). Asn-222 contributes to the Mg(2+) binding site. Residues 225-245 (VQLAELERVHQNNIARALLEH) are linker. Residues 246–452 (GVTLADPARI…GWQRPVKIKK (207 aa)) form an N-acetyltransferase region. Positions 328 and 346 each coordinate UDP-N-acetyl-alpha-D-glucosamine. The active-site Proton acceptor is the His-358. Residues Tyr-361 and Asn-372 each coordinate UDP-N-acetyl-alpha-D-glucosamine. Residues Ala-375, 381 to 382 (NY), Ser-400, Ala-418, and Arg-435 contribute to the acetyl-CoA site.

The protein in the N-terminal section; belongs to the N-acetylglucosamine-1-phosphate uridyltransferase family. In the C-terminal section; belongs to the transferase hexapeptide repeat family. As to quaternary structure, homotrimer. Mg(2+) is required as a cofactor.

The protein localises to the cytoplasm. It carries out the reaction alpha-D-glucosamine 1-phosphate + acetyl-CoA = N-acetyl-alpha-D-glucosamine 1-phosphate + CoA + H(+). It catalyses the reaction N-acetyl-alpha-D-glucosamine 1-phosphate + UTP + H(+) = UDP-N-acetyl-alpha-D-glucosamine + diphosphate. The protein operates within nucleotide-sugar biosynthesis; UDP-N-acetyl-alpha-D-glucosamine biosynthesis; N-acetyl-alpha-D-glucosamine 1-phosphate from alpha-D-glucosamine 6-phosphate (route II): step 2/2. It participates in nucleotide-sugar biosynthesis; UDP-N-acetyl-alpha-D-glucosamine biosynthesis; UDP-N-acetyl-alpha-D-glucosamine from N-acetyl-alpha-D-glucosamine 1-phosphate: step 1/1. It functions in the pathway bacterial outer membrane biogenesis; LPS lipid A biosynthesis. Its function is as follows. Catalyzes the last two sequential reactions in the de novo biosynthetic pathway for UDP-N-acetylglucosamine (UDP-GlcNAc). The C-terminal domain catalyzes the transfer of acetyl group from acetyl coenzyme A to glucosamine-1-phosphate (GlcN-1-P) to produce N-acetylglucosamine-1-phosphate (GlcNAc-1-P), which is converted into UDP-GlcNAc by the transfer of uridine 5-monophosphate (from uridine 5-triphosphate), a reaction catalyzed by the N-terminal domain. The chain is Bifunctional protein GlmU from Herminiimonas arsenicoxydans.